Reading from the N-terminus, the 155-residue chain is Large ribosomal subunit protein uL13 (155 aa).

It belongs to the universal ribosomal protein uL13 family. In terms of assembly, part of the 50S ribosomal subunit.

Functionally, this protein is one of the early assembly proteins of the 50S ribosomal subunit, although it is not seen to bind rRNA by itself. It is important during the early stages of 50S assembly. In Rickettsia akari (strain Hartford), this protein is Large ribosomal subunit protein uL13.